A 553-amino-acid polypeptide reads, in one-letter code: L-aspartate oxidase (553 aa).

FAD is bound by residues 13–16 (SGAA), K35, 42–49 (ASDWAQGG), and D208. Residue R275 is the Proton donor/acceptor of the active site. FAD contacts are provided by residues E364 and 380-381 (SL).

Belongs to the FAD-dependent oxidoreductase 2 family. NadB subfamily. FAD is required as a cofactor.

Its subcellular location is the cytoplasm. The catalysed reaction is L-aspartate + O2 = iminosuccinate + H2O2. It participates in cofactor biosynthesis; NAD(+) biosynthesis; iminoaspartate from L-aspartate (oxidase route): step 1/1. Catalyzes the oxidation of L-aspartate to iminoaspartate, the first step in the de novo biosynthesis of NAD(+). The polypeptide is L-aspartate oxidase (nadB) (Synechocystis sp. (strain ATCC 27184 / PCC 6803 / Kazusa)).